Reading from the N-terminus, the 373-residue chain is Muscleblind-like protein 2 (373 aa).

C3H1-type zinc fingers lie at residues 13–41, 47–73, 176–204, and 212–238; these read WLTLEVCRQYQRGTCSRSDEECKFAHPPK, NGRVIACFDSLKGRCSRENCKYLHPPT, TDKLEVCREFQRGNCARGETDCRFAHPAD, and DNTVTVCMDYIKGRCMREKCKYFHPPA.

This sequence belongs to the muscleblind family. As to quaternary structure, interacts with ITGA3.

It is found in the nucleus. The protein resides in the cytoplasm. Functionally, mediates pre-mRNA alternative splicing regulation. Acts either as activator or repressor of splicing on specific pre-mRNA targets. Inhibits cardiac troponin-T (TNNT2) pre-mRNA exon inclusion but induces insulin receptor (IR) pre-mRNA exon inclusion in muscle. Antagonizes the alternative splicing activity pattern of CELF proteins. RNA-binding protein that binds to 5'ACACCC-3' core sequence, termed zipcode, within the 3'UTR of ITGA3. Binds to CUG triplet repeat expansion in myotonic dystrophy muscle cells by sequestering the target RNAs. Together with RNA binding proteins RBPMS and RBFOX2, activates vascular smooth muscle cells alternative splicing events. Regulates NCOR2 alternative splicing. Seems to regulate expression and localization of ITGA3 by transporting it from the nucleus to cytoplasm at adhesion plaques. May play a role in myotonic dystrophy pathophysiology (DM). This chain is Muscleblind-like protein 2 (Mbnl2), found in Mus musculus (Mouse).